The sequence spans 227 residues: Phosphoribosylformylglycinamidine synthase subunit PurQ (227 aa).

Positions 3-225 (FAVIVFPGSN…LKQWRETYVV (223 aa)) constitute a Glutamine amidotransferase type-1 domain. The active-site Nucleophile is Cys86. Catalysis depends on residues His194 and Glu196.

In terms of assembly, part of the FGAM synthase complex composed of 1 PurL, 1 PurQ and 2 PurS subunits.

The protein localises to the cytoplasm. It carries out the reaction N(2)-formyl-N(1)-(5-phospho-beta-D-ribosyl)glycinamide + L-glutamine + ATP + H2O = 2-formamido-N(1)-(5-O-phospho-beta-D-ribosyl)acetamidine + L-glutamate + ADP + phosphate + H(+). The catalysed reaction is L-glutamine + H2O = L-glutamate + NH4(+). The protein operates within purine metabolism; IMP biosynthesis via de novo pathway; 5-amino-1-(5-phospho-D-ribosyl)imidazole from N(2)-formyl-N(1)-(5-phospho-D-ribosyl)glycinamide: step 1/2. Its function is as follows. Part of the phosphoribosylformylglycinamidine synthase complex involved in the purines biosynthetic pathway. Catalyzes the ATP-dependent conversion of formylglycinamide ribonucleotide (FGAR) and glutamine to yield formylglycinamidine ribonucleotide (FGAM) and glutamate. The FGAM synthase complex is composed of three subunits. PurQ produces an ammonia molecule by converting glutamine to glutamate. PurL transfers the ammonia molecule to FGAR to form FGAM in an ATP-dependent manner. PurS interacts with PurQ and PurL and is thought to assist in the transfer of the ammonia molecule from PurQ to PurL. This is Phosphoribosylformylglycinamidine synthase subunit PurQ from Bacillus cereus (strain B4264).